A 338-amino-acid polypeptide reads, in one-letter code: Methionyl-tRNA formyltransferase (338 aa).

Position 110 to 113 (110 to 113 (SLLP)) interacts with (6S)-5,6,7,8-tetrahydrofolate.

Belongs to the Fmt family.

It carries out the reaction L-methionyl-tRNA(fMet) + (6R)-10-formyltetrahydrofolate = N-formyl-L-methionyl-tRNA(fMet) + (6S)-5,6,7,8-tetrahydrofolate + H(+). Functionally, attaches a formyl group to the free amino group of methionyl-tRNA(fMet). The formyl group appears to play a dual role in the initiator identity of N-formylmethionyl-tRNA by promoting its recognition by IF2 and preventing the misappropriation of this tRNA by the elongation apparatus. This chain is Methionyl-tRNA formyltransferase, found in Synechococcus sp. (strain CC9902).